The sequence spans 574 residues: Proline--tRNA ligase (574 aa).

This sequence belongs to the class-II aminoacyl-tRNA synthetase family. ProS type 1 subfamily. As to quaternary structure, homodimer.

The protein resides in the cytoplasm. The enzyme catalyses tRNA(Pro) + L-proline + ATP = L-prolyl-tRNA(Pro) + AMP + diphosphate. Catalyzes the attachment of proline to tRNA(Pro) in a two-step reaction: proline is first activated by ATP to form Pro-AMP and then transferred to the acceptor end of tRNA(Pro). As ProRS can inadvertently accommodate and process non-cognate amino acids such as alanine and cysteine, to avoid such errors it has two additional distinct editing activities against alanine. One activity is designated as 'pretransfer' editing and involves the tRNA(Pro)-independent hydrolysis of activated Ala-AMP. The other activity is designated 'posttransfer' editing and involves deacylation of mischarged Ala-tRNA(Pro). The misacylated Cys-tRNA(Pro) is not edited by ProRS. The chain is Proline--tRNA ligase from Buchnera aphidicola subsp. Baizongia pistaciae (strain Bp).